The chain runs to 182 residues: UPF0690 protein C1orf52 homolog (182 aa).

Positions 1 to 61 (MAAEEKDPLS…AEKRLPGPDE (61 aa)) are disordered. The span at 23 to 32 (SDEEDNSEPE) shows a compositional bias: acidic residues. Basic and acidic residues predominate over residues 51–61 (KAEKRLPGPDE). Threonine 67 is modified (phosphothreonine). Tyrosine 132 carries the post-translational modification Phosphotyrosine. The segment at 132-182 (YEDNGDDAPQNAKKARLLPEGEETVESDDEKDEHTSKKRKIELGEPTKKKK) is disordered. Over residues 151-162 (EGEETVESDDEK) the composition is skewed to acidic residues. The residue at position 158 (serine 158) is a Phosphoserine. The span at 172–182 (IELGEPTKKKK) shows a compositional bias: basic and acidic residues.

The protein belongs to the UPF0690 family.

This Bos taurus (Bovine) protein is UPF0690 protein C1orf52 homolog.